We begin with the raw amino-acid sequence, 241 residues long: Uridylate kinase (241 aa).

15–18 (KLSG) is a binding site for ATP. An involved in allosteric activation by GTP region spans residues 23 to 28 (GAEGFG). Position 57 (G57) interacts with UMP. Positions 58 and 62 each coordinate ATP. UMP-binding positions include D77 and 138–145 (TGNPFFTT). The ATP site is built by T165, Y171, and D174.

This sequence belongs to the UMP kinase family. In terms of assembly, homohexamer.

The protein resides in the cytoplasm. The enzyme catalyses UMP + ATP = UDP + ADP. It functions in the pathway pyrimidine metabolism; CTP biosynthesis via de novo pathway; UDP from UMP (UMPK route): step 1/1. Its activity is regulated as follows. Allosterically activated by GTP. Inhibited by UTP. In terms of biological role, catalyzes the reversible phosphorylation of UMP to UDP. This is Uridylate kinase from Yersinia pseudotuberculosis serotype O:1b (strain IP 31758).